A 140-amino-acid chain; its full sequence is Putative pre-16S rRNA nuclease (140 aa).

This sequence belongs to the YqgF nuclease family.

It localises to the cytoplasm. In terms of biological role, could be a nuclease involved in processing of the 5'-end of pre-16S rRNA. The chain is Putative pre-16S rRNA nuclease from Chlorobium chlorochromatii (strain CaD3).